A 307-amino-acid polypeptide reads, in one-letter code: Glutaminase (307 aa).

Substrate contacts are provided by serine 66, asparagine 116, glutamate 160, asparagine 167, tyrosine 191, tyrosine 243, and valine 261.

The protein belongs to the glutaminase family. In terms of assembly, homotetramer.

The catalysed reaction is L-glutamine + H2O = L-glutamate + NH4(+). The chain is Glutaminase from Saccharophagus degradans (strain 2-40 / ATCC 43961 / DSM 17024).